A 333-amino-acid polypeptide reads, in one-letter code: Heat shock transcription factor, X-linked member 3 (333 aa).

Residues 1–66 (MASQNTEQEY…QDNSPPEDRN (66 aa)) form a disordered region. Positions 29-39 (GSSPDPNPDSS) are enriched in low complexity. A compositionally biased stretch (polar residues) spans 49–60 (AMSQDPGSQDNS). A DNA-binding region spans residues 79-182 (FRLSFPRKLW…PRLLENIQRK (104 aa)). The segment at 227-275 (QGAPSVQGPSGTQSFRRSGMWSKKSATRHPLGNGPPQEPNGPSWEGTSG) is disordered. Residues 228–242 (GAPSVQGPSGTQSFR) are compositionally biased toward polar residues.

This sequence belongs to the HSF family.

The protein resides in the nucleus. The protein is Heat shock transcription factor, X-linked member 3 of Homo sapiens (Human).